A 124-amino-acid chain; its full sequence is Profilin-2 (124 aa).

It belongs to the profilin family. As to quaternary structure, occurs in many kinds of cells as a complex with monomeric actin in a 1:1 ratio. Interacts with forH.

Its subcellular location is the cytoplasm. It is found in the cytoskeleton. Its function is as follows. Binds to actin and affects the structure of the cytoskeleton. At high concentrations, profilin prevents the polymerization of actin, whereas it enhances it at low concentrations. By binding to PIP2, it inhibits the formation of IP3 and DG. This is Profilin-2 (proB) from Dictyostelium discoideum (Social amoeba).